We begin with the raw amino-acid sequence, 266 residues long: Very-long-chain aldehyde decarbonylase GL1-11 (266 aa).

4 consecutive transmembrane segments (helical) span residues 25–45 (VVTF…SLLF), 74–94 (ILYH…AFKF), 106–126 (WTVI…IFYW), and 163–183 (ILFL…HLFT). In terms of domain architecture, Fatty acid hydroxylase spans 113-248 (VLFYFVLEDF…FVYMDWLFGT (136 aa)).

This sequence belongs to the sterol desaturase family. As to quaternary structure, homodimer.

The protein resides in the endoplasmic reticulum membrane. The catalysed reaction is a long-chain fatty aldehyde + 2 NADPH + O2 + H(+) = a long-chain alkane + formate + 2 NADP(+) + H2O. Aldehyde decarbonylase involved in the conversion of aldehydes to alkanes. Core component of a very-long-chain alkane synthesis complex. This Oryza sativa subsp. indica (Rice) protein is Very-long-chain aldehyde decarbonylase GL1-11.